Here is a 104-residue protein sequence, read N- to C-terminus: Large ribosomal subunit protein eL30 (104 aa).

Belongs to the eukaryotic ribosomal protein eL30 family.

The polypeptide is Large ribosomal subunit protein eL30 (RPL30) (Tetrahymena thermophila (strain SB210)).